The primary structure comprises 368 residues: DNA replication and repair protein RecF (368 aa).

ATP is bound at residue 30 to 37; it reads GDNGAGKT.

It belongs to the RecF family.

It is found in the cytoplasm. Functionally, the RecF protein is involved in DNA metabolism; it is required for DNA replication and normal SOS inducibility. RecF binds preferentially to single-stranded, linear DNA. It also seems to bind ATP. The protein is DNA replication and repair protein RecF of Xanthomonas axonopodis pv. citri (strain 306).